The primary structure comprises 293 residues: MATFSGPAGPILSLNPQEDVEFQKEVAQVRKRITQRKKQEQLTPGVVYVRHLPNLLDETQIFSYFSQFGTVTRFRLSRSKRTGNSKGYAFVEFESEDVAKIVAETMNNYLFGERLLECHFMPPEKVHKELFKDWNIPFKQPSYPSVKRYNRNRTLTQKLRMEERFKKKERLLRKKLAKKGIDYDFPSLILQKTESISKTNRQTSTKGQVLRKKKKKVSGTLDTPEKTVDSQGPTPVCTPTFLERRKSQVAELNDDDKDDEIVFKQPISCVKEEIQETQTPTHSRKKRRRSSNQ.

A2 carries the post-translational modification N-acetylalanine. Residue K38 forms a Glycyl lysine isopeptide (Lys-Gly) (interchain with G-Cter in SUMO2) linkage. In terms of domain architecture, RRM spans 45–123; sequence GVVYVRHLPN…RLLECHFMPP (79 aa). At R114 the chain carries Omega-N-methylarginine; by PRMT1 and PRMT8. A Glycyl lysine isopeptide (Lys-Gly) (interchain with G-Cter in SUMO2) cross-link involves residue K139. Residue S145 is modified to Phosphoserine. Residues K179 and K192 each participate in a glycyl lysine isopeptide (Lys-Gly) (interchain with G-Cter in SUMO2) cross-link. Polar residues predominate over residues 197–207; it reads SKTNRQTSTKG. The tract at residues 197 to 239 is disordered; the sequence is SKTNRQTSTKGQVLRKKKKKVSGTLDTPEKTVDSQGPTPVCTP. S218 is subject to Phosphoserine. T223 is modified (phosphothreonine). The interval 226 to 269 is interaction with MKI67; it reads KTVDSQGPTPVCTPTFLERRKSQVAELNDDDKDDEIVFKQPISC. A Phosphoserine modification is found at S230. 2 positions are modified to phosphothreonine: T234 and T238. 2 positions are modified to omega-N-methylated arginine; by PRMT1 and PRMT8: R244 and R245. A Phosphoserine modification is found at S247. Residue K271 forms a Glycyl lysine isopeptide (Lys-Gly) (interchain with G-Cter in SUMO1); alternate linkage. K271 participates in a covalent cross-link: Glycyl lysine isopeptide (Lys-Gly) (interchain with G-Cter in SUMO2); alternate. Residues 271–293 form a disordered region; that stretch reads KEEIQETQTPTHSRKKRRRSSNQ. T279 carries the phosphothreonine modification. A compositionally biased stretch (basic residues) spans 282-293; that stretch reads HSRKKRRRSSNQ. R284 carries the post-translational modification Omega-N-methylarginine; by PRMT1 and PRMT8.

In terms of assembly, binds to the FHA domain of MKI67; this interaction is enhanced in mitosis. Post-translationally, sequentially phosphorylated on Thr-238, Thr-234 and Ser-230. Thr-234 is phosphorylated only when Thr-238 is phosphorylated. Likewise, phosphorylation at Ser-230 requires that Thr-234 and Thr-238 are phosphorylated. Phosphorylation enhances MKI67 binding.

The protein localises to the nucleus. Its subcellular location is the nucleolus. It is found in the chromosome. This is MKI67 FHA domain-interacting nucleolar phosphoprotein (NIFK) from Homo sapiens (Human).